Reading from the N-terminus, the 235-residue chain is Orotidine 5'-phosphate decarboxylase (235 aa).

Residues Asp-17, Lys-39, 66–75, Thr-121, Arg-182, Gln-191, and Arg-212 contribute to the substrate site; that span reads DMKLLDIDHT. The Proton donor role is filled by Lys-68.

It belongs to the OMP decarboxylase family. Type 1 subfamily. In terms of assembly, homodimer.

It carries out the reaction orotidine 5'-phosphate + H(+) = UMP + CO2. Its pathway is pyrimidine metabolism; UMP biosynthesis via de novo pathway; UMP from orotate: step 2/2. Its function is as follows. Catalyzes the decarboxylation of orotidine 5'-monophosphate (OMP) to uridine 5'-monophosphate (UMP). The polypeptide is Orotidine 5'-phosphate decarboxylase (Bartonella bacilliformis).